A 299-amino-acid chain; its full sequence is Taste receptor type 2 member 1 (299 aa).

At 1-9 the chain is on the extracellular side; that stretch reads MLESHLIIY. Residues 10-30 form a helical membrane-spanning segment; that stretch reads FLLAVIQFLLGIFTNGIIVVV. The Cytoplasmic segment spans residues 31–55; the sequence is NGIDLIKHRKMAPLDLLLSCLAVSR. The helical transmembrane segment at 56–76 threads the bilayer; sequence IFLQLFIFYVNVIVIFFIEFI. At 77–81 the chain is on the extracellular side; it reads MCSAN. A helical transmembrane segment spans residues 82 to 102; the sequence is CAILLFINELELWLATWLGVF. Over 103-124 the chain is Cytoplasmic; sequence YCAKVASVRHPLFXWLKMRISK. Residues 125–145 traverse the membrane as a helical segment; that stretch reads LVPWMILGSLLYVSMICVFHS. Topologically, residues 146 to 178 are extracellular; it reads KYAGFMVPYFLRNFFSQNTTIQKEDTLAIQIFS. The N-linked (GlcNAc...) asparagine glycan is linked to Asn163. A helical transmembrane segment spans residues 179 to 199; the sequence is FVAEFSVPLLIFLVAVLLLIF. Topologically, residues 200–222 are cytoplasmic; that stretch reads SLGRHTRQMRNTVAGSRVPGRGA. The helical transmembrane segment at 223–243 threads the bilayer; that stretch reads PISALLSILSFLILYFSHCMI. At 244 to 257 the chain is on the extracellular side; sequence KVFLSSLKFHIRRF. The helical transmembrane segment at 258–278 threads the bilayer; the sequence is IFLFFILVIGIYPSGHSLILI. Residues 279 to 299 lie on the Cytoplasmic side of the membrane; that stretch reads LGNPKLKQNAKKFLLHSKCCQ.

Belongs to the G-protein coupled receptor T2R family.

The protein resides in the membrane. Its function is as follows. Receptor that may play a role in the perception of bitterness and is gustducin-linked. May play a role in sensing the chemical composition of the gastrointestinal content. The activity of this receptor may stimulate alpha gustducin, mediate PLC-beta-2 activation and lead to the gating of TRPM5. This Gorilla gorilla gorilla (Western lowland gorilla) protein is Taste receptor type 2 member 1 (TAS2R1).